The primary structure comprises 88 residues: ATP synthase subunit 9, mitochondrial (88 aa).

A run of 2 helical transmembrane segments spans residues 30–50 and 66–86; these read IGLTGAGAGVGIVFAAFILAV and LGFALSEAVGLLALMMSFLIL.

It belongs to the ATPase C chain family. In terms of assembly, F-type ATPases have 2 components, CF(1) - the catalytic core - and CF(0) - the membrane proton channel. CF(1) has five subunits: alpha(3), beta(3), gamma(1), delta(1), epsilon(1). CF(0) has three main subunits: a, b and c.

It is found in the mitochondrion membrane. Its function is as follows. Mitochondrial membrane ATP synthase (F(1)F(0) ATP synthase or Complex V) produces ATP from ADP in the presence of a proton gradient across the membrane which is generated by electron transport complexes of the respiratory chain. F-type ATPases consist of two structural domains, F(1) - containing the extramembraneous catalytic core and F(0) - containing the membrane proton channel, linked together by a central stalk and a peripheral stalk. During catalysis, ATP synthesis in the catalytic domain of F(1) is coupled via a rotary mechanism of the central stalk subunits to proton translocation. Part of the complex F(0) domain. A homomeric c-ring of probably 10 subunits is part of the complex rotary element. This Dictyostelium citrinum (Slime mold) protein is ATP synthase subunit 9, mitochondrial (atp9).